The primary structure comprises 235 residues: Phosphoribosylaminoimidazole-succinocarboxamide synthase (235 aa).

The protein belongs to the SAICAR synthetase family.

It carries out the reaction 5-amino-1-(5-phospho-D-ribosyl)imidazole-4-carboxylate + L-aspartate + ATP = (2S)-2-[5-amino-1-(5-phospho-beta-D-ribosyl)imidazole-4-carboxamido]succinate + ADP + phosphate + 2 H(+). The protein operates within purine metabolism; IMP biosynthesis via de novo pathway; 5-amino-1-(5-phospho-D-ribosyl)imidazole-4-carboxamide from 5-amino-1-(5-phospho-D-ribosyl)imidazole-4-carboxylate: step 1/2. This chain is Phosphoribosylaminoimidazole-succinocarboxamide synthase, found in Streptococcus sanguinis (strain SK36).